The following is a 362-amino-acid chain: Chorismate synthase (362 aa).

Position 48 (Arg48) interacts with NADP(+). Residues 131–133, 243–244, Gly288, 303–307, and Arg329 contribute to the FMN site; these read RAS, NA, and KPTSS.

The protein belongs to the chorismate synthase family. As to quaternary structure, homotetramer. The cofactor is FMNH2.

The catalysed reaction is 5-O-(1-carboxyvinyl)-3-phosphoshikimate = chorismate + phosphate. The protein operates within metabolic intermediate biosynthesis; chorismate biosynthesis; chorismate from D-erythrose 4-phosphate and phosphoenolpyruvate: step 7/7. Catalyzes the anti-1,4-elimination of the C-3 phosphate and the C-6 proR hydrogen from 5-enolpyruvylshikimate-3-phosphate (EPSP) to yield chorismate, which is the branch point compound that serves as the starting substrate for the three terminal pathways of aromatic amino acid biosynthesis. This reaction introduces a second double bond into the aromatic ring system. The polypeptide is Chorismate synthase (Bartonella tribocorum (strain CIP 105476 / IBS 506)).